The chain runs to 697 residues: General transcription factor IIH subunit 1 (697 aa).

A compositionally biased stretch (low complexity) spans 115–136 (LPVSASNGSNTTSPTNGTSPIN). 2 disordered regions span residues 115–141 (LPVS…TSPT) and 228–250 (KNDS…ADVR). 2 consecutive BSD domains span residues 174 to 231 (LSKL…KNDS) and 255 to 307 (TPNA…YFYR). The segment covering 412–422 (KNLKKTKKDEN) has biased composition (basic and acidic residues). The tract at residues 412 to 462 (KNLKKTKKDENSTSTPTTTTTTTNTTNTTNTTTTTTTNNTTIKDPNLYNGD) is disordered. Residues 423-452 (STSTPTTTTTTTNTTNTTNTTTTTTTNNTT) are compositionally biased toward low complexity.

It belongs to the TFB1 family. As to quaternary structure, component of the 7-subunit TFIIH core complex composed of XPB/repB, XPD/repD, gtf2h1, gtf2h2, gtf2h3, gtf2h4 and gtf2h5, which is active in NER. The core complex associates with the 3-subunit CDK-activating kinase (CAK) module composed of cycH/cyclin H, cdk7 and mnat1 to form the 10-subunit holoenzyme (holo-TFIIH) active in transcription.

Its subcellular location is the nucleus. Component of the general transcription and DNA repair factor IIH (TFIIH) core complex, which is involved in general and transcription-coupled nucleotide excision repair (NER) of damaged DNA and, when complexed to CAK, in RNA transcription by RNA polymerase II. In NER, TFIIH acts by opening DNA around the lesion to allow the excision of the damaged oligonucleotide and its replacement by a new DNA fragment. In transcription, TFIIH has an essential role in transcription initiation. When the pre-initiation complex (PIC) has been established, TFIIH is required for promoter opening and promoter escape. Phosphorylation of the C-terminal tail (CTD) of the largest subunit of RNA polymerase II by the kinase module CAK controls the initiation of transcription. The chain is General transcription factor IIH subunit 1 (gtf2h1) from Dictyostelium discoideum (Social amoeba).